Here is a 428-residue protein sequence, read N- to C-terminus: uncharacterized protein (428 aa).

Positions 72–91 (SQGSPVAPSPNHRSTMYSSS) are disordered. Residue Ser127 is modified to Phosphoserine.

This is an uncharacterized protein from Saccharomyces cerevisiae (strain ATCC 204508 / S288c) (Baker's yeast).